We begin with the raw amino-acid sequence, 958 residues long: Dermatan-sulfate epimerase (958 aa).

An N-terminal signal peptide occupies residues 1 to 22 (MRTHTRGAPSVFFICLFCFVSA). Residues 23-902 (CVTDENPEVM…APALSASYTR (880 aa)) lie on the Lumenal side of the membrane. N-linked (GlcNAc...) asparagine glycosylation occurs at Asn-183. The active-site Proton donor is His-205. The active site involves Tyr-261. N-linked (GlcNAc...) asparagine glycosylation is found at Asn-336 and Asn-411. Mn(2+) contacts are provided by His-452 and Glu-470. Tyr-473 is a catalytic residue. Residue Asn-481 participates in Mn(2+) binding. N-linked (GlcNAc...) asparagine glycosylation is found at Asn-642 and Asn-648. Residues 903–923 (LFLILNIAIFFVMLAMQLTYF) form a helical membrane-spanning segment. Residues 924–933 (QRAQSLHGQR) lie on the Cytoplasmic side of the membrane. The helical transmembrane segment at 934 to 954 (CLYAVLLIDSCILLWLYSSCS) threads the bilayer. Over 955–958 (QSQC) the chain is Lumenal.

It belongs to the dermatan-sulfate isomerase family. The cofactor is Mn(2+). N-glycosylated. Glycosylation is important for enzymatic activity.

The protein resides in the endoplasmic reticulum membrane. It is found in the golgi apparatus membrane. The protein localises to the cytoplasmic vesicle membrane. Its subcellular location is the microsome membrane. The enzyme catalyses chondroitin 4'-sulfate = dermatan 4'-sulfate. It functions in the pathway glycan metabolism; chondroitin sulfate biosynthesis. Its pathway is glycan metabolism; heparan sulfate biosynthesis. Functionally, converts D-glucuronic acid to L-iduronic acid (IdoUA) residues. Plays an important role in the biosynthesis of the glycosaminoglycan/mucopolysaccharide dermatan sulfate. The chain is Dermatan-sulfate epimerase (DSE) from Bos taurus (Bovine).